Consider the following 256-residue polypeptide: Pimeloyl-[acyl-carrier protein] methyl ester esterase (256 aa).

Positions 15–242 (HLVLLHGWGL…AAHAPFISHP (228 aa)) constitute an AB hydrolase-1 domain. Substrate-binding positions include Trp-22, 82–83 (SL), and 143–147 (FLALQ). Ser-82 serves as the catalytic Nucleophile. Active-site residues include Asp-207 and His-235. Position 235 (His-235) interacts with substrate.

Belongs to the AB hydrolase superfamily. Carboxylesterase BioH family. In terms of assembly, monomer.

Its subcellular location is the cytoplasm. It carries out the reaction 6-carboxyhexanoyl-[ACP] methyl ester + H2O = 6-carboxyhexanoyl-[ACP] + methanol + H(+). It functions in the pathway cofactor biosynthesis; biotin biosynthesis. In terms of biological role, the physiological role of BioH is to remove the methyl group introduced by BioC when the pimeloyl moiety is complete. It allows to synthesize pimeloyl-ACP via the fatty acid synthetic pathway through the hydrolysis of the ester bonds of pimeloyl-ACP esters. The protein is Pimeloyl-[acyl-carrier protein] methyl ester esterase of Escherichia coli O17:K52:H18 (strain UMN026 / ExPEC).